A 39-amino-acid polypeptide reads, in one-letter code: Contryphan-Cal3 (39 aa).

The signal sequence occupies residues 1-20 (MTRTAVLLLTLLFLVAMAAS). A disulfide bridge links C29 with C35.

As to expression, expressed by the venom duct.

It localises to the secreted. Probable neurotoxin. The polypeptide is Contryphan-Cal3 (Californiconus californicus (California cone)).